A 255-amino-acid polypeptide reads, in one-letter code: Zinc import ATP-binding protein ZnuC (255 aa).

The ABC transporter domain occupies 4-219 (VDVDGLSLRY…PEYRALFGTG (216 aa)). Position 36-43 (36-43 (GPNGSGKT)) interacts with ATP. A disordered region spans residues 234-255 (EHDHHDGCAHGQATEDRTEAAE).

It belongs to the ABC transporter superfamily. Zinc importer (TC 3.A.1.15.5) family. The complex is composed of two ATP-binding proteins (ZnuC), two transmembrane proteins (ZnuB) and a solute-binding protein (ZnuA).

Its subcellular location is the cell inner membrane. It catalyses the reaction Zn(2+)(out) + ATP(in) + H2O(in) = Zn(2+)(in) + ADP(in) + phosphate(in) + H(+)(in). Its function is as follows. Part of the ABC transporter complex ZnuABC involved in zinc import. Responsible for energy coupling to the transport system. The sequence is that of Zinc import ATP-binding protein ZnuC from Roseobacter denitrificans (strain ATCC 33942 / OCh 114) (Erythrobacter sp. (strain OCh 114)).